Here is a 166-residue protein sequence, read N- to C-terminus: Phosphopantetheine adenylyltransferase (166 aa).

S9 is a binding site for substrate. ATP-binding positions include 9–10 (SF) and H17. Substrate contacts are provided by K41, T74, and R88. ATP is bound by residues 89–91 (GLR), E99, and 124–130 (DSFISSS).

It belongs to the bacterial CoaD family. As to quaternary structure, homohexamer. Mg(2+) serves as cofactor.

The protein resides in the cytoplasm. It catalyses the reaction (R)-4'-phosphopantetheine + ATP + H(+) = 3'-dephospho-CoA + diphosphate. It participates in cofactor biosynthesis; coenzyme A biosynthesis; CoA from (R)-pantothenate: step 4/5. Reversibly transfers an adenylyl group from ATP to 4'-phosphopantetheine, yielding dephospho-CoA (dPCoA) and pyrophosphate. The polypeptide is Phosphopantetheine adenylyltransferase (Lactobacillus johnsonii (strain CNCM I-12250 / La1 / NCC 533)).